The chain runs to 364 residues: UDP-N-acetylglucosamine--N-acetylmuramyl-(pentapeptide) pyrophosphoryl-undecaprenol N-acetylglucosamine transferase (364 aa).

UDP-N-acetyl-alpha-D-glucosamine is bound by residues 10–12 (TAG), Asn124, Arg161, Ser195, and Gln291.

Belongs to the glycosyltransferase 28 family. MurG subfamily.

It localises to the cell membrane. It carries out the reaction di-trans,octa-cis-undecaprenyl diphospho-N-acetyl-alpha-D-muramoyl-L-alanyl-D-glutamyl-meso-2,6-diaminopimeloyl-D-alanyl-D-alanine + UDP-N-acetyl-alpha-D-glucosamine = di-trans,octa-cis-undecaprenyl diphospho-[N-acetyl-alpha-D-glucosaminyl-(1-&gt;4)]-N-acetyl-alpha-D-muramoyl-L-alanyl-D-glutamyl-meso-2,6-diaminopimeloyl-D-alanyl-D-alanine + UDP + H(+). Its pathway is cell wall biogenesis; peptidoglycan biosynthesis. In terms of biological role, cell wall formation. Catalyzes the transfer of a GlcNAc subunit on undecaprenyl-pyrophosphoryl-MurNAc-pentapeptide (lipid intermediate I) to form undecaprenyl-pyrophosphoryl-MurNAc-(pentapeptide)GlcNAc (lipid intermediate II). The protein is UDP-N-acetylglucosamine--N-acetylmuramyl-(pentapeptide) pyrophosphoryl-undecaprenol N-acetylglucosamine transferase of Streptomyces coelicolor (strain ATCC BAA-471 / A3(2) / M145).